The chain runs to 505 residues: Lysine--tRNA ligase (505 aa).

2 residues coordinate Mg(2+): Glu-415 and Glu-422.

Belongs to the class-II aminoacyl-tRNA synthetase family. In terms of assembly, homodimer. Requires Mg(2+) as cofactor.

Its subcellular location is the cytoplasm. It carries out the reaction tRNA(Lys) + L-lysine + ATP = L-lysyl-tRNA(Lys) + AMP + diphosphate. The chain is Lysine--tRNA ligase from Citrobacter koseri (strain ATCC BAA-895 / CDC 4225-83 / SGSC4696).